The sequence spans 561 residues: Acylcarnitine hydrolase (561 aa).

Positions 1–26 (MTRNQLHNWLNAGFFGLLLLLIHVQG) are cleaved as a signal peptide. A disulfide bridge connects residues Cys97 and Cys125. Ser230 acts as the Acyl-ester intermediate in catalysis. A disulfide bridge connects residues Cys282 and Cys293. Catalysis depends on charge relay system residues Glu347 and His459. Positions 558–561 (HREL) match the Prevents secretion from ER motif.

Belongs to the type-B carboxylesterase/lipase family. As to expression, detected in liver (at protein level).

It is found in the microsome. It localises to the endoplasmic reticulum. It catalyses the reaction an O-acyl-(R)-carnitine + H2O = (R)-carnitine + a fatty acid + H(+). The catalysed reaction is all-trans-retinyl hexadecanoate + H2O = all-trans-retinol + hexadecanoate + H(+). Hydrolase with high activity towards palmitoylcarnitine. Is also active with p-nitrophenylacetate and alpha-naphthylacetate. May also hydrolyze retinyl esters. This is Acylcarnitine hydrolase from Mus musculus (Mouse).